We begin with the raw amino-acid sequence, 416 residues long: Counting factor 60 (416 aa).

Residues 1 to 22 form the signal peptide; the sequence is MIKKSALITLFLVSLILGVSLS. N-linked (GlcNAc...) asparagine glycosylation is found at Asn-110, Asn-218, Asn-231, Asn-318, and Asn-411.

The protein belongs to the histidine acid phosphatase family. As to quaternary structure, component of the counting factor (CF) complex, which includes cf60, cf50, cf45-1 and ctnA.

The protein resides in the secreted. Functionally, cell-counting factor that limits the maximum size of the multicellular structure. Does not possess acid phosphatase activity. Cells with decreased levels of this protein form large groups while cells overexpressing this protein form small groups. The polypeptide is Counting factor 60 (cf60) (Dictyostelium discoideum (Social amoeba)).